The chain runs to 360 residues: MDSNKEKALAAALGQIEKQFGKGSIMRLGDTQSLDIDSIPTGSLSLDIALGIGGLPMGRIVEIFGPESSGKTTLTLEVIAQAQKAGKTCAFIDAEHALDPIYAGKLGVKVDDLLVSQPDTGEQALEICDMLVRSGAVDVIIIDSVAALTPKAEIEGDMGDSHVGLQARLMSQALRKLTGNIKNANCLCIFINQIRMKIGVMFGNPETTTGGNALKFYASVRLDIRRTGAIKDGEEIVGNETRVKVVKNKVAPPFKQADFQILYGEGISKESELIDLGVKCKLIDKSGAWYAYKGDKIGQGKANAMKYLKENTAAAEEIELKLRELLLSHNPPTEIAVAPVVEEFTPSDDELDSLSLSDDI.

65 to 72 (GPESSGKT) is a binding site for ATP.

This sequence belongs to the RecA family.

Its subcellular location is the cytoplasm. Can catalyze the hydrolysis of ATP in the presence of single-stranded DNA, the ATP-dependent uptake of single-stranded DNA by duplex DNA, and the ATP-dependent hybridization of homologous single-stranded DNAs. It interacts with LexA causing its activation and leading to its autocatalytic cleavage. This Tolumonas auensis (strain DSM 9187 / NBRC 110442 / TA 4) protein is Protein RecA.